The sequence spans 142 residues: Large ribosomal subunit protein uL11 (142 aa).

This sequence belongs to the universal ribosomal protein uL11 family. Part of the ribosomal stalk of the 50S ribosomal subunit. Interacts with L10 and the large rRNA to form the base of the stalk. L10 forms an elongated spine to which L12 dimers bind in a sequential fashion forming a multimeric L10(L12)X complex. Post-translationally, one or more lysine residues are methylated.

In terms of biological role, forms part of the ribosomal stalk which helps the ribosome interact with GTP-bound translation factors. The sequence is that of Large ribosomal subunit protein uL11 from Yersinia pseudotuberculosis serotype O:1b (strain IP 31758).